The sequence spans 339 residues: tRNA pseudouridine synthase D (339 aa).

The active-site Nucleophile is the Asp-80. A TRUD domain is found at 155–311 (GFPNYFTEQR…AKGFSWAFEL (157 aa)).

Belongs to the pseudouridine synthase TruD family.

It catalyses the reaction uridine(13) in tRNA = pseudouridine(13) in tRNA. Responsible for synthesis of pseudouridine from uracil-13 in transfer RNAs. The chain is tRNA pseudouridine synthase D from Haemophilus influenzae (strain PittEE).